A 569-amino-acid chain; its full sequence is Thiol:disulfide interchange protein DsbD (569 aa).

The first 19 residues, 1-19 (MAQRILTLILLLCSTSAFA), serve as a signal peptide directing secretion. Intrachain disulfides connect cysteine 122–cysteine 128 and cysteine 187–cysteine 309. The next 7 membrane-spanning stretches (helical) occupy residues 168 to 188 (LPFSALWALLIGIGIAFTPCV), 213 to 233 (LLTFIYVQGMALTYTALGLVV), 248 to 268 (YVLIGLALVFTLLALSMFGLF), 301 to 321 (IAGLICSPCTTAPLSAILLYI), 328 to 348 (WLGGGTLYLYALGMGLPLILI), 362 to 382 (WMEHVKTAFGFVILALPVFLL), and 391 to 411 (GLRLWSLLGVAFFGWAFITSL). The region spanning 430 to 569 (LVSVRPLQDW…FSAHLRDRQP (140 aa)) is the Thioredoxin domain. Residues cysteine 484 and cysteine 487 are joined by a disulfide bond.

The protein belongs to the thioredoxin family. DsbD subfamily.

Its subcellular location is the cell inner membrane. It carries out the reaction [protein]-dithiol + NAD(+) = [protein]-disulfide + NADH + H(+). The enzyme catalyses [protein]-dithiol + NADP(+) = [protein]-disulfide + NADPH + H(+). Its function is as follows. Required to facilitate the formation of correct disulfide bonds in some periplasmic proteins and for the assembly of the periplasmic c-type cytochromes. Acts by transferring electrons from cytoplasmic thioredoxin to the periplasm. This transfer involves a cascade of disulfide bond formation and reduction steps. This is Thiol:disulfide interchange protein DsbD from Citrobacter koseri (strain ATCC BAA-895 / CDC 4225-83 / SGSC4696).